The chain runs to 274 residues: Small ribosomal subunit biogenesis GTPase RsgA (274 aa).

The region spanning 58-215 (KNYLNRPKVA…LVDSPGFSIY (158 aa)) is the CP-type G domain. GTP contacts are provided by residues 108–111 (SKLD) and 158–166 (GHSGVGKST). Zn(2+)-binding residues include C238, C243, H245, and C252.

It belongs to the TRAFAC class YlqF/YawG GTPase family. RsgA subfamily. Monomer. Associates with 30S ribosomal subunit, binds 16S rRNA. Requires Zn(2+) as cofactor.

The protein localises to the cytoplasm. Functionally, one of several proteins that assist in the late maturation steps of the functional core of the 30S ribosomal subunit. Helps release RbfA from mature subunits. May play a role in the assembly of ribosomal proteins into the subunit. Circularly permuted GTPase that catalyzes slow GTP hydrolysis, GTPase activity is stimulated by the 30S ribosomal subunit. The polypeptide is Small ribosomal subunit biogenesis GTPase RsgA (Mycoplasmoides gallisepticum (strain R(low / passage 15 / clone 2)) (Mycoplasma gallisepticum)).